We begin with the raw amino-acid sequence, 418 residues long: tRNA wybutosine-synthesizing protein 2 (418 aa).

S-adenosyl-L-methionine is bound by residues Ser-228, Lys-235, 275–276, and 302–303; these read EI and EN.

This sequence belongs to the class I-like SAM-binding methyltransferase superfamily. TRM5/TYW2 family.

It is found in the cytoplasm. The protein localises to the nucleus. The enzyme catalyses 4-demethylwyosine(37) in tRNA(Phe) + S-adenosyl-L-methionine = 4-demethyl-7-[(3S)-3-amino-3-carboxypropyl]wyosine(37) in tRNA(Phe) + S-methyl-5'-thioadenosine + H(+). Its pathway is tRNA modification; wybutosine-tRNA(Phe) biosynthesis. S-adenosyl-L-methionine-dependent transferase that acts as a component of the wybutosine biosynthesis pathway. Wybutosine is a hyper modified guanosine with a tricyclic base found at the 3'-position adjacent to the anticodon of eukaryotic phenylalanine tRNA. Catalyzes the transfer of the alpha-amino-alpha-carboxypropyl (acp) group from S-adenosyl-L-methionine to the C-7 position of 4-demethylwyosine (imG-14) to produce wybutosine-86. This is tRNA wybutosine-synthesizing protein 2 (trm12) from Schizosaccharomyces pombe (strain 972 / ATCC 24843) (Fission yeast).